The primary structure comprises 205 residues: Putative 3-methyladenine DNA glycosylase (205 aa).

This sequence belongs to the DNA glycosylase MPG family.

The polypeptide is Putative 3-methyladenine DNA glycosylase (Bacillus cereus (strain AH187)).